Reading from the N-terminus, the 193-residue chain is Signal peptidase complex catalytic subunit SEC11 (193 aa).

The Cytoplasmic portion of the chain corresponds to 1-16 (MFSEELKAFRRLGIRH). Residues 17–41 (LLLQALNFASVIASGLMMWKGLGVI) traverse the membrane as a helical; Signal-anchor for type II membrane protein segment. At 42-193 (TNTESPIVVV…LGLMALIQRE (152 aa)) the chain is on the lumenal side. Catalysis depends on charge relay system residues Ser55 and His95. An N-linked (GlcNAc...) asparagine glycan is attached at Asn106. The active-site Charge relay system is Asp136. The segment at 179-190 (GLLGILGLMALI) is C-terminal short (CTS) helix.

This sequence belongs to the peptidase S26B family. In terms of assembly, component of the signal peptidase complex (SPC) composed of a catalytic subunit SEC11 and three accessory subunits SPC1, SPC2 and SPC3. The complex induces a local thinning of the ER membrane which is used to measure the length of the signal peptide (SP) h-region of protein substrates. This ensures the selectivity of the complex towards h-regions shorter than 18-20 amino acids. SPC associates with the translocon complex.

It is found in the endoplasmic reticulum membrane. It carries out the reaction Cleavage of hydrophobic, N-terminal signal or leader sequences from secreted and periplasmic proteins.. Functionally, catalytic component of the signal peptidase complex (SPC) which catalyzes the cleavage of N-terminal signal sequences from nascent proteins as they are translocated into the lumen of the endoplasmic reticulum. Specifically cleaves N-terminal signal peptides that contain a hydrophobic alpha-helix (h-region) shorter than 18-20 amino acids. This chain is Signal peptidase complex catalytic subunit SEC11 (SEC11), found in Schizophyllum commune (strain H4-8 / FGSC 9210) (Split gill fungus).